The sequence spans 253 residues: Imidazole glycerol phosphate synthase subunit HisF (253 aa).

Catalysis depends on residues Asp11 and Asp130.

It belongs to the HisA/HisF family. As to quaternary structure, heterodimer of HisH and HisF.

Its subcellular location is the cytoplasm. The enzyme catalyses 5-[(5-phospho-1-deoxy-D-ribulos-1-ylimino)methylamino]-1-(5-phospho-beta-D-ribosyl)imidazole-4-carboxamide + L-glutamine = D-erythro-1-(imidazol-4-yl)glycerol 3-phosphate + 5-amino-1-(5-phospho-beta-D-ribosyl)imidazole-4-carboxamide + L-glutamate + H(+). The protein operates within amino-acid biosynthesis; L-histidine biosynthesis; L-histidine from 5-phospho-alpha-D-ribose 1-diphosphate: step 5/9. In terms of biological role, IGPS catalyzes the conversion of PRFAR and glutamine to IGP, AICAR and glutamate. The HisF subunit catalyzes the cyclization activity that produces IGP and AICAR from PRFAR using the ammonia provided by the HisH subunit. This chain is Imidazole glycerol phosphate synthase subunit HisF, found in Gluconobacter oxydans (strain 621H) (Gluconobacter suboxydans).